The primary structure comprises 212 residues: Protein ERP5 (212 aa).

Positions 1 to 20 (MKYNIVHGICLLFAITQAVG) are cleaved as a signal peptide. Residues 21–178 (AVHFYAKSGE…FRNQSESANS (158 aa)) are Lumenal-facing. One can recognise a GOLD domain in the interval 31–124 (TKCFYEHLSR…TLRVFIELEI (94 aa)). Residue N171 is glycosylated (N-linked (GlcNAc...) asparagine). Residues 179 to 199 (KIMTWSVFQLLILLGTCAFQL) form a helical membrane-spanning segment. Over 200–212 (RYLKNFFVKQKVV) the chain is Cytoplasmic.

Belongs to the EMP24/GP25L family.

It is found in the endoplasmic reticulum membrane. In terms of biological role, involved in vesicular protein trafficking. This chain is Protein ERP5 (ERP5), found in Saccharomyces cerevisiae (strain ATCC 204508 / S288c) (Baker's yeast).